Reading from the N-terminus, the 364-residue chain is 1-aminocyclopropane-1-carboxylate oxidase homolog 11 (364 aa).

Residues Lys213 to Ser312 enclose the Fe2OG dioxygenase domain. Positions 237, 239, and 293 each coordinate Fe cation. Arg303 serves as a coordination point for 2-oxoglutarate.

The protein belongs to the iron/ascorbate-dependent oxidoreductase family. The cofactor is Fe(2+).

The polypeptide is 1-aminocyclopropane-1-carboxylate oxidase homolog 11 (Arabidopsis thaliana (Mouse-ear cress)).